The chain runs to 286 residues: Glycine--tRNA ligase alpha subunit (286 aa).

It belongs to the class-II aminoacyl-tRNA synthetase family. As to quaternary structure, tetramer of two alpha and two beta subunits.

Its subcellular location is the cytoplasm. The catalysed reaction is tRNA(Gly) + glycine + ATP = glycyl-tRNA(Gly) + AMP + diphosphate. The chain is Glycine--tRNA ligase alpha subunit from Thermotoga sp. (strain RQ2).